Here is a 306-residue protein sequence, read N- to C-terminus: Serine/threonine-protein kinase KIN28 (306 aa).

Residues 7 to 290 (YTKEKKVGEG…AVQCLESDYF (284 aa)) form the Protein kinase domain. Residues 13–21 (VGEGTYAVV) and lysine 36 contribute to the ATP site. Aspartate 129 functions as the Proton acceptor in the catalytic mechanism. Position 162 is a phosphothreonine; by CAK (threonine 162).

Belongs to the protein kinase superfamily. CMGC Ser/Thr protein kinase family. CDC2/CDKX subfamily. CCL1 and KIN28 form the TFIIK complex, a component of the TFIIH holo complex. Component of a complex consisting of KIN28, CCL1 and TFB3. Interacts with TFB3. Also interacts with HNT1 and HOG1. Phosphorylation of Thr-162 regulates the affinity of interaction between CCL1, KIN28 and TFB3. Thr-162 phosphorylation does not vary through the cell cycle and is necessary for full kinase activity.

It is found in the nucleus. It carries out the reaction [DNA-directed RNA polymerase] + ATP = phospho-[DNA-directed RNA polymerase] + ADP + H(+). In terms of biological role, catalytic component of the TFIIK complex (KIN28-CCL1 dimer) which is the protein kinase component of transcription factor IIH (TFIIH) and phosphorylates the C-terminal domain of RNA polymerase II during transition from transcription to elongation after preinitiation complex (PIC) formation, thereby positively regulating transcription. TFIIH (or factor B) is essential for both basal and activated transcription, and is involved in nucleotide excision repair (NER) of damaged DNA. TFIIH has DNA-dependent ATPase activity and is essential for polymerase II transcription in vitro. Essential for cell proliferation. This Saccharomyces cerevisiae (strain ATCC 204508 / S288c) (Baker's yeast) protein is Serine/threonine-protein kinase KIN28 (KIN28).